Reading from the N-terminus, the 90-residue chain is Acylphosphatase (90 aa).

One can recognise an Acylphosphatase-like domain in the interval 3-89; sequence ALKIRVEGIV…EGYEDFTIKY (87 aa). Active-site residues include Arg18 and Asn36.

The protein belongs to the acylphosphatase family.

The enzyme catalyses an acyl phosphate + H2O = a carboxylate + phosphate + H(+). This is Acylphosphatase (acyP) from Thermotoga maritima (strain ATCC 43589 / DSM 3109 / JCM 10099 / NBRC 100826 / MSB8).